Reading from the N-terminus, the 379-residue chain is DnaJ homolog subfamily B member 14 (379 aa).

Residues 1–244 (MEGNRDEAEK…GHEREEERAD (244 aa)) lie on the Cytoplasmic side of the membrane. Positions 56–90 (TAGSSTHCRKPPGSSDQSKPSCGKDGTSGAGEGGK) are disordered. In terms of domain architecture, J spans 108-172 (NYYEVLGVTK…EKRKQYDLTG (65 aa)). A helical membrane pass occupies residues 245–265 (GGFSVFIQLMPIIVLILVSLL). At 266–379 (SQLMVSNPPY…ERLTSLYKGG (114 aa)) the chain is on the lumenal side.

Belongs to the DnaJ family. DNAJB12/DNAJB14 subfamily. As to quaternary structure, interacts (via J domain) with HSPA8/Hsc70. Forms a multiprotein complex, at least composed of DNAJB12, DNAJB14, HSPA8/Hsc70 and SGTA; interaction with DNAJB14 and HSPA8/Hsc70 is direct.

It is found in the endoplasmic reticulum membrane. The protein localises to the nucleus membrane. In terms of biological role, acts as a co-chaperone with HSPA8/Hsc70; required to promote protein folding and trafficking, prevent aggregation of client proteins, and promote unfolded proteins to endoplasmic reticulum-associated degradation (ERAD) pathway. Acts by determining HSPA8/Hsc70's ATPase and polypeptide-binding activities. Can also act independently of HSPA8/Hsc70: together with DNAJB12, acts as a chaperone that promotes maturation of potassium channels KCND2 and KCNH2 by stabilizing nascent channel subunits and assembling them into tetramers. While stabilization of nascent channel proteins is dependent on HSPA8/Hsc70, the process of oligomerization of channel subunits is independent of HSPA8/Hsc70. When overexpressed, forms membranous structures together with DNAJB12 and HSPA8/Hsc70 within the nucleus; the role of these structures, named DJANGOs, is still unclear. The sequence is that of DnaJ homolog subfamily B member 14 from Mus musculus (Mouse).